The sequence spans 367 residues: 2-aminoethylphosphonate--pyruvate transaminase (367 aa).

Pyridoxal 5'-phosphate contacts are provided by residues Ser-65–Ser-67, Tyr-92, Thr-143, and Asp-168. Lys-194 carries the post-translational modification N6-(pyridoxal phosphate)lysine. Pyridoxal 5'-phosphate is bound at residue Thr-243.

The protein belongs to the class-V pyridoxal-phosphate-dependent aminotransferase family. PhnW subfamily. In terms of assembly, homodimer. Pyridoxal 5'-phosphate serves as cofactor.

It catalyses the reaction (2-aminoethyl)phosphonate + pyruvate = phosphonoacetaldehyde + L-alanine. Involved in phosphonate degradation. The protein is 2-aminoethylphosphonate--pyruvate transaminase (phnW) of Salmonella typhimurium (strain LT2 / SGSC1412 / ATCC 700720).